Consider the following 92-residue polypeptide: MHGERPSLEDITLILEEIPEIVDLHCDEQFDNSEEDTNYQLTEPAVQAYGVVTTCCKCHSTVRLVVECGAADIRHLEQLFLNTLTIVCPRCV.

The tract at residues 1–43 (MHGERPSLEDITLILEEIPEIVDLHCDEQFDNSEEDTNYQLTE) is E7 terminal domain. The LXCXE motif; interaction with host RB1 and TMEM173/STING motif lies at 24–28 (LHCDE). The segment at 55 to 91 (CCKCHSTVRLVVECGAADIRHLEQLFLNTLTIVCPRC) is a zinc-finger region. Residues 73 to 81 (IRHLEQLFL) carry the Nuclear export signal motif.

The protein belongs to the papillomaviridae E7 protein family. In terms of assembly, homodimer. Homooligomer. Interacts with host RB1; this interaction induces dissociation of RB1-E2F1 complex thereby disrupting RB1 activity. Interacts with host EP300; this interaction represses EP300 transcriptional activity. Interacts with protein E2; this interaction inhibits E7 oncogenic activity. Interacts with host TMEM173/STING; this interaction impairs the ability of TMEM173/STING to sense cytosolic DNA and promote the production of type I interferon (IFN-alpha and IFN-beta). Post-translationally, highly phosphorylated.

It localises to the host cytoplasm. It is found in the host nucleus. Its function is as follows. Plays a role in viral genome replication by driving entry of quiescent cells into the cell cycle. Stimulation of progression from G1 to S phase allows the virus to efficiently use the cellular DNA replicating machinery to achieve viral genome replication. E7 protein has both transforming and trans-activating activities. Induces the disassembly of the E2F1 transcription factor from RB1, with subsequent transcriptional activation of E2F1-regulated S-phase genes. Interferes with host histone deacetylation mediated by HDAC1 and HDAC2, leading to transcription activation. Also plays a role in the inhibition of both antiviral and antiproliferative functions of host interferon alpha. Interaction with host TMEM173/STING impairs the ability of TMEM173/STING to sense cytosolic DNA and promote the production of type I interferon (IFN-alpha and IFN-beta). The sequence is that of Protein E7 from Homo sapiens (Human).